Here is a 247-residue protein sequence, read N- to C-terminus: DNA polymerase sliding clamp 1 (247 aa).

This sequence belongs to the PCNA family. As to quaternary structure, heterotrimer. The subunits circularize to form a toroid; DNA passes through its center. Replication factor C (RFC) is required to load the toroid on the DNA.

Its function is as follows. Sliding clamp subunit that acts as a moving platform for DNA processing. Responsible for tethering the catalytic subunit of DNA polymerase and other proteins to DNA during high-speed replication. The chain is DNA polymerase sliding clamp 1 from Aeropyrum pernix (strain ATCC 700893 / DSM 11879 / JCM 9820 / NBRC 100138 / K1).